Reading from the N-terminus, the 471-residue chain is MKIKTRFAPSPTGYLHVGGARTALYSWLFARHHGGEFVLRIEDTDLERSTPEAIEAIMDGMNWLNLEWDEGPYFQTKRFERYNAVIDEMLEAGTAYKCYCSKERLEQLREEQMAKGEKPRYDGRCRHSHEHHDDDEPCVVRFANPQDGSVIFDDQIRGPIEFSNQELDDLIIRRTDGSPTYNFCVVVDDWDMEITHVIRGEDHINNTPRQINILKALNAPVPMYAHVSMINGDDGKKLSKRHGAVSVMQYRDDGYLPEALLNYLVRLGWSSGDQEIFTREEMIKLFSLGAVSKSASAFNTDKLLWLNHHYINTLAPEYVATHLQWHIEQENIDTRNGPQLAELVKLLGERCKTLKEMAQSCRYFYEDFSEFDADAAKKHLRPVARQPLEVVRDKLSAITDWSAENVHHAIQATADELEVGMGKVGMPLRVAVTGAGQSPALDVTVHAIGKTRSIERINKALGFIAERESQQ.

The 'HIGH' region signature appears at 9-19 (PSPTGYLHVGG). Positions 98, 100, 125, and 127 each coordinate Zn(2+). A 'KMSKS' region motif is present at residues 237-241 (KLSKR). K240 is a binding site for ATP.

The protein belongs to the class-I aminoacyl-tRNA synthetase family. Glutamate--tRNA ligase type 1 subfamily. Monomer. The cofactor is Zn(2+).

Its subcellular location is the cytoplasm. The enzyme catalyses tRNA(Glu) + L-glutamate + ATP = L-glutamyl-tRNA(Glu) + AMP + diphosphate. Its function is as follows. Catalyzes the attachment of glutamate to tRNA(Glu) in a two-step reaction: glutamate is first activated by ATP to form Glu-AMP and then transferred to the acceptor end of tRNA(Glu). This is Glutamate--tRNA ligase from Salmonella choleraesuis (strain SC-B67).